The primary structure comprises 307 residues: Serine/threonine-protein phosphatase 4 catalytic subunit (307 aa).

Residues aspartate 54, histidine 56, aspartate 82, and asparagine 114 each coordinate Mn(2+). Residue histidine 115 is the Proton donor of the active site. Residues histidine 164 and histidine 238 each contribute to the Mn(2+) site. Leucine methyl ester is present on leucine 307.

It belongs to the PPP phosphatase family. PP-4 (PP-X) subfamily. In terms of assembly, serine/threonine-protein phosphatase 4 (PP4) occurs in different assemblies of the catalytic and one or more regulatory subunits. Probably part of a PP4 PPP4C-PPP4R2-PPP4R3 complex containing Pp4-19C, PPP4R2r and flfl. Interacts with Ptpa; thereby mediating basal localization of the Miranda (Mira) complex; probably by dephosphorylation of Mira. It depends on Mn(2+) as a cofactor. Reversibly methyl esterified on Leu-307 by leucine carboxyl methyltransferase 1 (LCMT1) and protein phosphatase methylesterase 1 (PPME1). Carboxyl methylation influences the affinity of the catalytic subunit for the different regulatory subunits, thereby modulating the PP2A holoenzyme's substrate specificity, enzyme activity and cellular localization.

It localises to the cytoplasm. The protein resides in the nucleus. Its subcellular location is the cytoskeleton. The protein localises to the microtubule organizing center. It is found in the centrosome. The catalysed reaction is O-phospho-L-seryl-[protein] + H2O = L-seryl-[protein] + phosphate. The enzyme catalyses O-phospho-L-threonyl-[protein] + H2O = L-threonyl-[protein] + phosphate. In terms of biological role, protein phosphatase that regulates many processes such as microtubule organization at centrosomes. The probable PP4 complex Pp4-19C-PPP4R2r-flfl (PPP4C-PPP4R2-PPP4R3) is required to prevent caspase-induced cell death (in vitro). This Drosophila melanogaster (Fruit fly) protein is Serine/threonine-protein phosphatase 4 catalytic subunit (Pp4-19C).